Here is a 1327-residue protein sequence, read N- to C-terminus: Myb-like protein O (1327 aa).

Positions 131-142 are enriched in low complexity; that stretch reads NNNINTTNNNNK. Disordered regions lie at residues 131-153, 263-390, 504-668, and 717-770; these read NNNI…EESN, EEED…DESS, PPQQ…NHES, and KKKK…DNDD. Residues 263 to 283 are compositionally biased toward acidic residues; the sequence is EEEDDEDYIPPEEEEDDDEDN. Residues 322-353 are compositionally biased toward low complexity; that stretch reads YNNTANNINNNNIGDESDNNNNNNNNINNNSN. Residues 356–374 are compositionally biased toward acidic residues; that stretch reads DDDDDDDDDNNDDDDDDND. Residues 511 to 532 show a composition bias toward low complexity; that stretch reads SSSSINSSNTMSSSSSSSSLSK. Residues 533 to 542 are compositionally biased toward basic residues; it reads NKLKKKKKEE. Over residues 543 to 554 the composition is skewed to basic and acidic residues; it reads KRKEEKRKEEKR. Residues 555–577 are compositionally biased toward basic residues; sequence KEKKRKKRQSITISKFKKNKKKT. Over residues 585 to 606 the composition is skewed to acidic residues; that stretch reads SESDSSSDDSDDSDFYYSDIEE. Residues 607–619 show a composition bias toward gly residues; it reads GGGGNGNGSGSGV. Positions 624–633 are enriched in acidic residues; it reads SDNEEGDSSS. Composition is skewed to low complexity over residues 646-668 and 722-732; these read HTNN…NHES and QSSSSSSSSTI. Acidic residues predominate over residues 754–770; the sequence is NDDEDDNNNNNEDDNDD. The 57-residue stretch at 897–953 folds into the HTH myb-type domain; the sequence is NVKLNQLKFTGGEDLLLLMGVKRFGTFNWRIIQKRYFPNKTDDQLFHRYKNLLSHSS. The H-T-H motif DNA-binding region spans 925-949; the sequence is WRIIQKRYFPNKTDDQLFHRYKNLL. In terms of domain architecture, Myb-like 1 spans 959-1010; the sequence is KQYLNGAKFTKEEEEKLDGAIKIHGLKWDIISRDYLHWKEPAMLKKFYEKRE. 2 stretches are compositionally biased toward low complexity: residues 1061–1118 and 1144–1160; these read NSTN…NENN and PIIE…ETSP. 2 disordered regions span residues 1061–1122 and 1144–1168; these read NSTN…YEFG and PIIE…PCPI. The 49-residue stretch at 1268–1316 folds into the Myb-like 2 domain; that stretch reads KWTREEDRIILITVKEKGTVDNEIWKSLSDTKIQDKTPDQIMYRYLQLL.

The protein resides in the nucleus. This chain is Myb-like protein O (mybO), found in Dictyostelium discoideum (Social amoeba).